The sequence spans 335 residues: MIGLAVTTTKKIAKWKVDEVAELTEKLKTHKTIIIANIEGFPADKLHEIRKKLRGKADIKVTKNNLFNIALKNAGYDTKLFESYLTGPNAFIFTDTNPFELQLFLSKFKLKRYALPGDKADEEVVVPAGDTGIAAGPMLSVFGKLKIKTKVQDGKIHILQDTTVAKPGDEIPADIVPILQKLGIMPVYVKLNIKIAYDNGVIIPGDKLSINLDDYTNEIRKAHINAFAVATEIAYPEPKVLEFTATKAMRNALALASEIGYITQETAQAVFTKAVMKAYAVASSISGKVDLGVQIQAQPQVSEQAAEKKEEKKEEEKKGPSEEEIGGGLSSLFGG.

Residues glutamine 300–glycine 335 form a disordered region. The span at alanine 305–serine 321 shows a compositional bias: basic and acidic residues. Residues glycine 326–glycine 335 show a composition bias toward gly residues.

Belongs to the universal ribosomal protein uL10 family. Part of the 50S ribosomal subunit. Forms part of the ribosomal stalk which helps the ribosome interact with GTP-bound translation factors. Forms a heptameric L10(L12)2(L12)2(L12)2 complex, where L10 forms an elongated spine to which the L12 dimers bind in a sequential fashion.

Forms part of the ribosomal stalk, playing a central role in the interaction of the ribosome with GTP-bound translation factors. The polypeptide is Large ribosomal subunit protein uL10 (Sulfolobus acidocaldarius (strain ATCC 33909 / DSM 639 / JCM 8929 / NBRC 15157 / NCIMB 11770)).